The primary structure comprises 193 residues: dCTP deaminase (193 aa).

DCTP-binding positions include 110–115, D128, 136–138, Y171, K178, and Q182; these read RSSLAR and VLE. E138 serves as the catalytic Proton donor/acceptor. Residues 169 to 193 form a disordered region; it reads RPYNSRQDAKYKGQQGAVASRIDKD.

It belongs to the dCTP deaminase family. Homotrimer.

It catalyses the reaction dCTP + H2O + H(+) = dUTP + NH4(+). Its pathway is pyrimidine metabolism; dUMP biosynthesis; dUMP from dCTP (dUTP route): step 1/2. Catalyzes the deamination of dCTP to dUTP. The sequence is that of dCTP deaminase from Erwinia tasmaniensis (strain DSM 17950 / CFBP 7177 / CIP 109463 / NCPPB 4357 / Et1/99).